The following is a 228-amino-acid chain: Cytidylate kinase (228 aa).

17–25 (GPTASGKGT) contributes to the ATP binding site.

Belongs to the cytidylate kinase family. Type 1 subfamily.

The protein localises to the cytoplasm. It catalyses the reaction CMP + ATP = CDP + ADP. The catalysed reaction is dCMP + ATP = dCDP + ADP. The polypeptide is Cytidylate kinase (Burkholderia ambifaria (strain ATCC BAA-244 / DSM 16087 / CCUG 44356 / LMG 19182 / AMMD) (Burkholderia cepacia (strain AMMD))).